Consider the following 571-residue polypeptide: Quinone-dependent D-lactate dehydrogenase (571 aa).

One can recognise an FAD-binding PCMH-type domain in the interval 44–273 (GGGPVFAVVR…FAVRTRTFPR (230 aa)). FAD-binding positions include 78–82 (ASNTG), 86–87 (GS), Gly145, Ser152, Gly162, and Val263.

It belongs to the quinone-dependent D-lactate dehydrogenase family. FAD is required as a cofactor.

The protein localises to the cell membrane. The catalysed reaction is (R)-lactate + a quinone = a quinol + pyruvate. In terms of biological role, catalyzes the oxidation of D-lactate to pyruvate. Also has weak activity with L-lactate and DL-2-hydroxybutyrate. Electrons derived from D-lactate oxidation enter the electron transport chain. Essential for growth with D-lactate as sole carbon and energy source. The polypeptide is Quinone-dependent D-lactate dehydrogenase (Corynebacterium glutamicum (strain ATCC 13032 / DSM 20300 / JCM 1318 / BCRC 11384 / CCUG 27702 / LMG 3730 / NBRC 12168 / NCIMB 10025 / NRRL B-2784 / 534)).